The chain runs to 304 residues: Non-specific ribonucleoside hydrolase RihC (304 aa).

Residue His233 is part of the active site.

The protein belongs to the IUNH family. RihC subfamily.

Functionally, hydrolyzes both purine and pyrimidine ribonucleosides with a broad-substrate specificity. This Escherichia coli O7:K1 (strain IAI39 / ExPEC) protein is Non-specific ribonucleoside hydrolase RihC.